Here is a 123-residue protein sequence, read N- to C-terminus: Large ribosomal subunit protein uL24 (123 aa).

It belongs to the universal ribosomal protein uL24 family. In terms of assembly, part of the 50S ribosomal subunit.

Its function is as follows. One of two assembly initiator proteins, it binds directly to the 5'-end of the 23S rRNA, where it nucleates assembly of the 50S subunit. In terms of biological role, one of the proteins that surrounds the polypeptide exit tunnel on the outside of the subunit. The polypeptide is Large ribosomal subunit protein uL24 (Kineococcus radiotolerans (strain ATCC BAA-149 / DSM 14245 / SRS30216)).